The following is a 928-amino-acid chain: Heme/hemopexin-binding protein (928 aa).

The signal sequence occupies residues 1-21 (MYKLNVISLIILTTCSGAAYA). Repeat copies occupy residues 101-106 (NGKVYL), 149-154 (KDRQVL), 155-160 (KEGLVL), 161-166 (KDGQVV), 167-172 (KEGQVI), 205-210 (NGKVYL), 279-284 (NGKVVL), 410-415 (NGKVNL), 635-640 (NGFVHL), and 674-679 (NGKVSM). A 6 X 6 AA approximate repeats region spans residues 101–679 (NGKVYLANPN…RLGMNGKVSM (579 aa)). A 4 X 6 AA approximate tandem repeats region spans residues 149-172 (KDRQVLKEGLVLKDGQVVKEGQVI).

The protein localises to the secreted. Binds heme/hemopexin complexes. The polypeptide is Heme/hemopexin-binding protein (hxuA) (Haemophilus influenzae).